Here is a 267-residue protein sequence, read N- to C-terminus: MSSFASFLDMWRDLDKYLSSLTIFNIQSSFMRIFLLFLFFVLFTFGVEGYVIEEINGSTGLRIHKEIKRKVYITEDALITETEKEFMVQKIENGLPRIYRVIKSSKSYMDFSKMTPLFLVSLPFLDCKQRVCVVNRGAFRPTNEYKKIRGFKARKVVVESHALGKKTTLIQWYTKEWKELVEANRLEDKFYVNFIRAIMKEKNLSEANIPLKEIQNFLKEINEKFGGVVRTQQQMPLFNTYSEVISVKKTEIPDYIYKLPEGYTKIK.

A helical transmembrane segment spans residues 30 to 52; that stretch reads FMRIFLLFLFFVLFTFGVEGYVI.

Its subcellular location is the membrane. This is an uncharacterized protein from Aquifex aeolicus (strain VF5).